Consider the following 320-residue polypeptide: Biotin synthase (320 aa).

In terms of domain architecture, Radical SAM core spans 46-275 (NMGRRVDLCS…YAHIRYAGGR (230 aa)). [4Fe-4S] cluster contacts are provided by cysteine 64, cysteine 68, and cysteine 71. Residues serine 108, cysteine 140, cysteine 200, and arginine 270 each coordinate [2Fe-2S] cluster.

Belongs to the radical SAM superfamily. Biotin synthase family. Homodimer. It depends on [4Fe-4S] cluster as a cofactor. [2Fe-2S] cluster is required as a cofactor.

The catalysed reaction is (4R,5S)-dethiobiotin + (sulfur carrier)-SH + 2 reduced [2Fe-2S]-[ferredoxin] + 2 S-adenosyl-L-methionine = (sulfur carrier)-H + biotin + 2 5'-deoxyadenosine + 2 L-methionine + 2 oxidized [2Fe-2S]-[ferredoxin]. It functions in the pathway cofactor biosynthesis; biotin biosynthesis; biotin from 7,8-diaminononanoate: step 2/2. Functionally, catalyzes the conversion of dethiobiotin (DTB) to biotin by the insertion of a sulfur atom into dethiobiotin via a radical-based mechanism. This chain is Biotin synthase, found in Acetivibrio thermocellus (strain ATCC 27405 / DSM 1237 / JCM 9322 / NBRC 103400 / NCIMB 10682 / NRRL B-4536 / VPI 7372) (Clostridium thermocellum).